The sequence spans 90 residues: Small ribosomal subunit protein uS15c (90 aa).

Belongs to the universal ribosomal protein uS15 family. Part of the 30S ribosomal subunit.

The protein resides in the plastid. It is found in the chloroplast. This Panax ginseng (Korean ginseng) protein is Small ribosomal subunit protein uS15c (rps15).